A 451-amino-acid chain; its full sequence is PTS system cellobiose-specific EIIC component (451 aa).

Residues 8 to 423 enclose the PTS EIIC type-3 domain; sequence LEDRVMPVAG…FIAFAIYYPF (416 aa). 10 consecutive transmembrane segments (helical) span residues 31 to 51, 72 to 92, 104 to 124, 138 to 158, 187 to 207, 227 to 247, 250 to 270, 293 to 313, 347 to 367, and 407 to 427; these read GIILSMPLLIIGSLFLIVGFL, LLYPVGATFDIMALVVSFGVA, LSAGAISLAAFLLATPYQVPF, GIPVQWVGSKGLFVAMILAIV, FVALIPGAAVLVVVWVARLIL, LSVLGGSVFGAIVAVLLVQLL, TGLHGAAIVGGVMGPIWLSLM, FFDLWIYIGGSGATLALALTM, IVMNPLLIIPFILVPVVLVVV, and ILQIVNFFIAFAIYYPFFSIW.

It is found in the cell membrane. Its function is as follows. The phosphoenolpyruvate-dependent sugar phosphotransferase system (sugar PTS), a major carbohydrate active transport system, catalyzes the phosphorylation of incoming sugar substrates concomitantly with their translocation across the cell membrane. The enzyme II CelABD PTS system is involved in cellobiose transport. The polypeptide is PTS system cellobiose-specific EIIC component (Geobacillus stearothermophilus (Bacillus stearothermophilus)).